An 89-amino-acid polypeptide reads, in one-letter code: Small ribosomal subunit protein uS15 (89 aa).

Belongs to the universal ribosomal protein uS15 family. Part of the 30S ribosomal subunit. Forms a bridge to the 50S subunit in the 70S ribosome, contacting the 23S rRNA.

Its function is as follows. One of the primary rRNA binding proteins, it binds directly to 16S rRNA where it helps nucleate assembly of the platform of the 30S subunit by binding and bridging several RNA helices of the 16S rRNA. In terms of biological role, forms an intersubunit bridge (bridge B4) with the 23S rRNA of the 50S subunit in the ribosome. The chain is Small ribosomal subunit protein uS15 from Methylococcus capsulatus (strain ATCC 33009 / NCIMB 11132 / Bath).